The primary structure comprises 791 residues: Diacylglycerol kinase gamma (791 aa).

2 disordered regions span residues 82-103 (KPRH…ANSA) and 117-154 (DEAC…SSSS). Residues 83–92 (PRHETSDHPT) show a composition bias toward basic and acidic residues. Residues 94–103 (GASNSEANSA) show a composition bias toward polar residues. EF-hand domains are found at residues 175–210 (RPQD…MLHI) and 220–255 (ELRP…TIPL). Ca(2+) contacts are provided by Asp188, Asp190, Asn192, Glu199, Asp233, Asp235, Asp237, and Glu244. 2 consecutive Phorbol-ester/DAG-type zinc fingers follow at residues 271–321 (RHAW…IPGC) and 336–385 (QHAW…LCDG). The DAGKc domain maps to 430-564 (PGTHPLLVLV…LDRWHLEVIP (135 aa)). The segment at 768-791 (APMMMGPPQKSSFFSLRRKSRSKD) is disordered.

Belongs to the eukaryotic diacylglycerol kinase family. In terms of tissue distribution, predominantly expressed in retina and in a much lesser extent in the brain. Other tissues contain extremely low levels of DGK-gamma.

The protein resides in the membrane. The protein localises to the cytoplasm. It is found in the cytosol. Its subcellular location is the cytoskeleton. It catalyses the reaction a 1,2-diacyl-sn-glycerol + ATP = a 1,2-diacyl-sn-glycero-3-phosphate + ADP + H(+). It carries out the reaction 1,2-didecanoyl-sn-glycerol + ATP = 1,2-didecanoyl-sn-glycero-3-phosphate + ADP + H(+). The enzyme catalyses 1-octadecanoyl-2-(5Z,8Z,11Z,14Z-eicosatetraenoyl)-sn-glycerol + ATP = 1-octadecanoyl-2-(5Z,8Z,11Z,14Z-eicosatetraenoyl)-sn-glycero-3-phosphate + ADP + H(+). The catalysed reaction is 1,2-di-(9Z-octadecenoyl)-sn-glycerol + ATP = 1,2-di-(9Z-octadecenoyl)-sn-glycero-3-phosphate + ADP + H(+). It catalyses the reaction 1-octadecanoyl-2-(9Z,12Z)-octadecadienoyl-sn-glycerol + ATP = 1-octadecanoyl-2-(9Z,12Z-octadecadienoyl)-sn-glycero-3-phosphate + ADP + H(+). Its pathway is lipid metabolism; glycerolipid metabolism. The activity is calcium-dependent. Requires phosphatidylserine for maximal activity. In terms of biological role, diacylglycerol kinase that converts diacylglycerol/DAG into phosphatidic acid/phosphatidate/PA and regulates the respective levels of these two bioactive lipids. Thereby, acts as a central switch between the signaling pathways activated by these second messengers with different cellular targets and opposite effects in numerous biological processes. Has no apparent specificity with regard to the acyl compositions of diacylglycerol. Specifically expressed in the cerebellum where it controls the level of diacylglycerol which in turn regulates the activity of protein kinase C gamma. Through protein kinase C gamma, indirectly regulates the dendritic development of Purkinje cells, cerebellar long term depression and ultimately cerebellar motor coordination. This chain is Diacylglycerol kinase gamma (DGKG), found in Homo sapiens (Human).